A 78-amino-acid chain; its full sequence is Large ribosomal subunit protein bL28 (78 aa).

The tract at residues 1-27 is disordered; it reads MSAYCQVTGRKPSFGKSVSHSHRRTNR.

Belongs to the bacterial ribosomal protein bL28 family.

In Corynebacterium kroppenstedtii (strain DSM 44385 / JCM 11950 / CIP 105744 / CCUG 35717), this protein is Large ribosomal subunit protein bL28.